Reading from the N-terminus, the 229-residue chain is Ras-related protein Rab-33B (229 aa).

The GTP site is built by N43, V44, G45, K46, T47, C48, T62, and T65. Residue T47 coordinates Mg(2+). Positions 56-68 (GRFPDRTEATIGV) match the Switch 1 motif. Residues T65 and D88 each coordinate Mg(2+). Positions 89–108 (TAGQERFRKSMVQHYYRNVH) match the Switch 2 motif. Residues G91, N148, K149, D151, A179, and K180 each contribute to the GTP site. 2 S-geranylgeranyl cysteine lipidation sites follow: C227 and C229. A Cysteine methyl ester modification is found at C229.

The protein belongs to the small GTPase superfamily. Rab family. In terms of assembly, interacts (GTP- and GDP-bound forms) with ATG16L1; the complex consists of a tetramer where two RAB33B molecules bind independently one molecule of the ATG16L1 homodimer; the interaction promotes ATG12-ATG5-ATG16L1 complex recruitment to phagophores. Interacts with ATG16L2; however interaction is approximately hundred times lower than for ATG16L1. Interacts with RIC1 (via C-terminus domain); the interaction is direct with a preference for RAB33B-GTP. Interacts with RGP1. Mg(2+) is required as a cofactor. In terms of processing, prenylated. In terms of tissue distribution, ubiquitous.

It is found in the golgi apparatus membrane. It localises to the golgi apparatus. The protein resides in the cis-Golgi network. The protein localises to the preautophagosomal structure membrane. It carries out the reaction GTP + H2O = GDP + phosphate + H(+). Its activity is regulated as follows. Regulated by guanine nucleotide exchange factors (GEFs) which promote the exchange of bound GDP for free GTP. Regulated by GTPase activating proteins (GAPs) such as SGSM2 which increase the GTP hydrolysis activity. Inhibited by GDP dissociation inhibitors (GDIs). In terms of biological role, the small GTPases Rab are key regulators of intracellular membrane trafficking, from the formation of transport vesicles to their fusion with membranes. Rabs cycle between an inactive GDP-bound form and an active GTP-bound form that is able to recruit to membranes different sets of downstream effectors directly responsible for vesicle formation, movement, tethering and fusion. RAB33B acts, in coordination with RAB6A, to regulate intra-Golgi retrograde trafficking. Participates in autophagosome formation by recruiting the ATG12-ATG5-ATG16L1 complex to phagophores, probably in a nucleotide-independent manner. This is Ras-related protein Rab-33B from Mus musculus (Mouse).